The following is a 173-amino-acid chain: Ribosome maturation factor RimM (173 aa).

Residues 93–166 (EDEYLVSDMI…KMLVDTIEGM (74 aa)) form the PRC barrel domain.

The protein belongs to the RimM family. In terms of assembly, binds ribosomal protein uS19.

The protein resides in the cytoplasm. Its function is as follows. An accessory protein needed during the final step in the assembly of 30S ribosomal subunit, possibly for assembly of the head region. Essential for efficient processing of 16S rRNA. May be needed both before and after RbfA during the maturation of 16S rRNA. It has affinity for free ribosomal 30S subunits but not for 70S ribosomes. The protein is Ribosome maturation factor RimM of Fusobacterium nucleatum subsp. nucleatum (strain ATCC 25586 / DSM 15643 / BCRC 10681 / CIP 101130 / JCM 8532 / KCTC 2640 / LMG 13131 / VPI 4355).